The primary structure comprises 23 residues: Malate dehydrogenase (23 aa).

Asn7 contacts NAD(+). Position 23 (Arg23) interacts with substrate.

Belongs to the LDH/MDH superfamily. MDH type 1 family. Homodimer.

The enzyme catalyses (S)-malate + NAD(+) = oxaloacetate + NADH + H(+). The protein is Malate dehydrogenase of Pseudotsuga menziesii (Douglas-fir).